The chain runs to 120 residues: FK506-binding protein 1A (120 aa).

The PPIase FKBP-type domain maps to 26-114 (GDNVDVHYKG…IFETELVGIK (89 aa)).

The protein belongs to the FKBP-type PPIase family. FKBP1 subfamily.

It localises to the cytoplasm. It catalyses the reaction [protein]-peptidylproline (omega=180) = [protein]-peptidylproline (omega=0). Functionally, PPIases accelerate the folding of proteins. It catalyzes the cis-trans isomerization of proline imidic peptide bonds in oligopeptides. This Neurospora crassa (strain ATCC 24698 / 74-OR23-1A / CBS 708.71 / DSM 1257 / FGSC 987) protein is FK506-binding protein 1A (fkr-2).